We begin with the raw amino-acid sequence, 206 residues long: Glycerol-3-phosphate acyltransferase (206 aa).

Transmembrane regions (helical) follow at residues 14–34 (IALA…GLIL), 67–87 (ATLL…GYFL), 91–111 (AAII…WIGF), 124–144 (LLGV…AVAF), and 148–168 (YSSL…LILG).

The protein belongs to the PlsY family. Probably interacts with PlsX.

It is found in the cell inner membrane. It carries out the reaction an acyl phosphate + sn-glycerol 3-phosphate = a 1-acyl-sn-glycero-3-phosphate + phosphate. It functions in the pathway lipid metabolism; phospholipid metabolism. Catalyzes the transfer of an acyl group from acyl-phosphate (acyl-PO(4)) to glycerol-3-phosphate (G3P) to form lysophosphatidic acid (LPA). This enzyme utilizes acyl-phosphate as fatty acyl donor, but not acyl-CoA or acyl-ACP. This is Glycerol-3-phosphate acyltransferase from Rhizobium etli (strain CIAT 652).